Consider the following 520-residue polypeptide: Gamma aminobutyrate transaminase 3, chloroplastic (520 aa).

A chloroplast-targeting transit peptide spans 1–44; it reads MAKITSLIGSGIVAATNQVGPHVKHIPAVGNLQKQIVSDQIQVR. 172 to 173 serves as a coordination point for pyridoxal 5'-phosphate; the sequence is GS. Residue Tyr205 participates in substrate binding. Asp312 contributes to the pyridoxal 5'-phosphate binding site. Lys341 contacts substrate. An N6-(pyridoxal phosphate)lysine modification is found at Lys341.

Belongs to the class-III pyridoxal-phosphate-dependent aminotransferase family. In terms of tissue distribution, expressed in leaves, roots, stems, flowers and fruits.

Its subcellular location is the plastid. It localises to the chloroplast. The enzyme catalyses 4-aminobutanoate + pyruvate = succinate semialdehyde + L-alanine. It carries out the reaction 4-aminobutanoate + glyoxylate = succinate semialdehyde + glycine. In terms of biological role, transaminase that degrades gamma-amino butyric acid (GABA) and uses pyruvate or glyoxylate as amino-group acceptor. Cannot use beta-alanine, ornithine, acetylornithine, serine, glycine, asparagine, glutamine, glutamate, valine, leucine, isoleucine, methionine, phenylalanine, histidine, lysine, arginine, aspartate, threonine, tyrosine, tryptophan, proline, or cysteine as amino donors. The protein is Gamma aminobutyrate transaminase 3, chloroplastic (GABA-TP3) of Solanum lycopersicum (Tomato).